The following is a 99-amino-acid chain: MNKTEFIAFMTDHGHNHKHASHKTLTKADAEKALNLVLDSVISAIKSHHNINITGFGSFEIHHRKAREGRNPKTGAKMKIDAYNQPTFRAGRKMKEACN.

The tract at residues 67-86 (REGRNPKTGAKMKIDAYNQP) is disordered.

Belongs to the bacterial histone-like protein family. As to quaternary structure, homodimer.

Histone-like DNA-binding protein which is capable of wrapping DNA to stabilize it, and thus to prevent its denaturation under extreme environmental conditions. The protein is DNA-binding protein HU (hup) of Rickettsia felis (strain ATCC VR-1525 / URRWXCal2) (Rickettsia azadi).